The chain runs to 473 residues: tRNA modification GTPase MnmE (473 aa).

Residues Arg-28, Glu-93, and Arg-132 each coordinate (6S)-5-formyl-5,6,7,8-tetrahydrofolate. Residues 228–394 (GVATVLVGSP…LKQQMSNMVA (167 aa)) enclose the TrmE-type G domain. Residues 238–243 (NAGKST), 257–263 (SHQPGTT), and 282–285 (DTAG) each bind GTP. Mg(2+)-binding residues include Ser-242 and Thr-263. Lys-473 lines the (6S)-5-formyl-5,6,7,8-tetrahydrofolate pocket.

Belongs to the TRAFAC class TrmE-Era-EngA-EngB-Septin-like GTPase superfamily. TrmE GTPase family. As to quaternary structure, homodimer. Heterotetramer of two MnmE and two MnmG subunits. The cofactor is K(+).

It is found in the cytoplasm. Exhibits a very high intrinsic GTPase hydrolysis rate. Involved in the addition of a carboxymethylaminomethyl (cmnm) group at the wobble position (U34) of certain tRNAs, forming tRNA-cmnm(5)s(2)U34. The sequence is that of tRNA modification GTPase MnmE from Chlorobium chlorochromatii (strain CaD3).